The primary structure comprises 720 residues: Inactive serine protease PAMR1 (720 aa).

Residues 1–21 (MELGCWTQLGLTFLQLLLISS) form the signal peptide. 8 disulfides stabilise this stretch: Cys-128–Cys-150, Cys-177–Cys-199, Cys-239–Cys-250, Cys-244–Cys-260, Cys-262–Cys-271, Cys-280–Cys-329, Cys-315–Cys-342, and Cys-414–Cys-442. The CUB domain occupies 128-236 (CGQVLRAPKG…DGFHAIFEEI (109 aa)). An EGF-like domain is found at 235-272 (EITACSSSPCFHDGTCVLDKAGSYKCACLAGYTGQRCE). Sushi domains are found at residues 278 to 344 (RNCS…ICIK) and 387 to 444 (APTK…SCIP). The 276-residue stretch at 445–720 (ICGKIENVTA…FKDWIERNMK (276 aa)) folds into the Peptidase S1 domain. Residue Asn-451 is glycosylated (N-linked (GlcNAc...) asparagine). A disulfide bridge links Cys-489 with Cys-505. Asn-614 is a glycosylation site (N-linked (GlcNAc...) asparagine). 2 disulfides stabilise this stretch: Cys-630-Cys-649 and Cys-661-Cys-697.

This sequence belongs to the peptidase S1 family.

The protein localises to the secreted. May play a role in regeneration of skeletal muscle. The polypeptide is Inactive serine protease PAMR1 (PAMR1) (Pongo abelii (Sumatran orangutan)).